Consider the following 211-residue polypeptide: Protein GrpE (211 aa).

The tract at residues 1–43 (MTDETTKNGPDATAADAAADAAANVEIDNSVQEEAKQPDPLEL) is disordered. A compositionally biased stretch (low complexity) spans 11 to 23 (DATAADAAADAAA). Residues 33 to 43 (EEAKQPDPLEL) are compositionally biased toward basic and acidic residues.

This sequence belongs to the GrpE family. Homodimer.

The protein resides in the cytoplasm. In terms of biological role, participates actively in the response to hyperosmotic and heat shock by preventing the aggregation of stress-denatured proteins, in association with DnaK and GrpE. It is the nucleotide exchange factor for DnaK and may function as a thermosensor. Unfolded proteins bind initially to DnaJ; upon interaction with the DnaJ-bound protein, DnaK hydrolyzes its bound ATP, resulting in the formation of a stable complex. GrpE releases ADP from DnaK; ATP binding to DnaK triggers the release of the substrate protein, thus completing the reaction cycle. Several rounds of ATP-dependent interactions between DnaJ, DnaK and GrpE are required for fully efficient folding. In Rhizobium etli (strain ATCC 51251 / DSM 11541 / JCM 21823 / NBRC 15573 / CFN 42), this protein is Protein GrpE.